We begin with the raw amino-acid sequence, 293 residues long: ATP synthase subunit a (293 aa).

6 consecutive transmembrane segments (helical) span residues Asp40–Ala60, Phe98–Leu118, Asp151–Ile171, Phe188–Ile208, Met225–Phe245, and Ala264–Val284.

The protein belongs to the ATPase A chain family. F-type ATPases have 2 components, CF(1) - the catalytic core - and CF(0) - the membrane proton channel. CF(1) has five subunits: alpha(3), beta(3), gamma(1), delta(1), epsilon(1). CF(0) has three main subunits: a(1), b(2) and c(9-12). The alpha and beta chains form an alternating ring which encloses part of the gamma chain. CF(1) is attached to CF(0) by a central stalk formed by the gamma and epsilon chains, while a peripheral stalk is formed by the delta and b chains.

Its subcellular location is the cell inner membrane. In terms of biological role, key component of the proton channel; it plays a direct role in the translocation of protons across the membrane. This chain is ATP synthase subunit a, found in Bordetella avium (strain 197N).